The sequence spans 70 residues: Cytochrome c oxidase subunit 8B, mitochondrial (70 aa).

The N-terminal 24 residues, 1-24 (MPRLPPILRLLQAPAKFTVVPKAH), are a transit peptide targeting the mitochondrion. Over 25–38 (VSAKPAKTPTSAVE) the chain is Mitochondrial matrix. The chain crosses the membrane as a helical span at residues 39 to 60 (QAVGISAIVVGFMVPAGWVLAH). Topologically, residues 61–70 (LESYKKSSAA) are mitochondrial intermembrane.

It belongs to the cytochrome c oxidase VIII family. In terms of assembly, component of the cytochrome c oxidase (complex IV, CIV), a multisubunit enzyme composed of 14 subunits. The complex is composed of a catalytic core of 3 subunits MT-CO1, MT-CO2 and MT-CO3, encoded in the mitochondrial DNA, and 11 supernumerary subunits COX4I, COX5A, COX5B, COX6A, COX6B, COX6C, COX7A, COX7B, COX7C, COX8 and NDUFA4, which are encoded in the nuclear genome. The complex exists as a monomer or a dimer and forms supercomplexes (SCs) in the inner mitochondrial membrane with NADH-ubiquinone oxidoreductase (complex I, CI) and ubiquinol-cytochrome c oxidoreductase (cytochrome b-c1 complex, complex III, CIII), resulting in different assemblies (supercomplex SCI(1)III(2)IV(1) and megacomplex MCI(2)III(2)IV(2)).

It localises to the mitochondrion inner membrane. Its pathway is energy metabolism; oxidative phosphorylation. Functionally, component of the cytochrome c oxidase, the last enzyme in the mitochondrial electron transport chain which drives oxidative phosphorylation. The respiratory chain contains 3 multisubunit complexes succinate dehydrogenase (complex II, CII), ubiquinol-cytochrome c oxidoreductase (cytochrome b-c1 complex, complex III, CIII) and cytochrome c oxidase (complex IV, CIV), that cooperate to transfer electrons derived from NADH and succinate to molecular oxygen, creating an electrochemical gradient over the inner membrane that drives transmembrane transport and the ATP synthase. Cytochrome c oxidase is the component of the respiratory chain that catalyzes the reduction of oxygen to water. Electrons originating from reduced cytochrome c in the intermembrane space (IMS) are transferred via the dinuclear copper A center (CU(A)) of subunit 2 and heme A of subunit 1 to the active site in subunit 1, a binuclear center (BNC) formed by heme A3 and copper B (CU(B)). The BNC reduces molecular oxygen to 2 water molecules using 4 electrons from cytochrome c in the IMS and 4 protons from the mitochondrial matrix. The sequence is that of Cytochrome c oxidase subunit 8B, mitochondrial (Cox8b) from Mus musculus (Mouse).